We begin with the raw amino-acid sequence, 311 residues long: Probable deoxyhypusine synthase (311 aa).

Lys284 serves as the catalytic Nucleophile.

It belongs to the deoxyhypusine synthase family. NAD(+) serves as cofactor.

The catalysed reaction is [eIF5A protein]-L-lysine + spermidine = [eIF5A protein]-deoxyhypusine + propane-1,3-diamine. It functions in the pathway protein modification; eIF5A hypusination. Catalyzes the NAD-dependent oxidative cleavage of spermidine and the subsequent transfer of the butylamine moiety of spermidine to the epsilon-amino group of a specific lysine residue of the eIF-5A precursor protein to form the intermediate deoxyhypusine residue. The polypeptide is Probable deoxyhypusine synthase (dys) (Sulfurisphaera tokodaii (strain DSM 16993 / JCM 10545 / NBRC 100140 / 7) (Sulfolobus tokodaii)).